Consider the following 384-residue polypeptide: Succinyl-diaminopimelate desuccinylase (384 aa).

H71 provides a ligand contact to Zn(2+). Residue D73 is part of the active site. Residue D104 coordinates Zn(2+). E139 functions as the Proton acceptor in the catalytic mechanism. Positions 140, 168, and 357 each coordinate Zn(2+).

The protein belongs to the peptidase M20A family. DapE subfamily. Homodimer. The cofactor is Zn(2+). Requires Co(2+) as cofactor.

The enzyme catalyses N-succinyl-(2S,6S)-2,6-diaminopimelate + H2O = (2S,6S)-2,6-diaminopimelate + succinate. It functions in the pathway amino-acid biosynthesis; L-lysine biosynthesis via DAP pathway; LL-2,6-diaminopimelate from (S)-tetrahydrodipicolinate (succinylase route): step 3/3. Functionally, catalyzes the hydrolysis of N-succinyl-L,L-diaminopimelic acid (SDAP), forming succinate and LL-2,6-diaminopimelate (DAP), an intermediate involved in the bacterial biosynthesis of lysine and meso-diaminopimelic acid, an essential component of bacterial cell walls. This is Succinyl-diaminopimelate desuccinylase from Bradyrhizobium sp. (strain BTAi1 / ATCC BAA-1182).